The primary structure comprises 61 residues: Small ribosomal subunit protein uS14 (61 aa).

Residues Cys24, Cys27, Cys40, and Cys43 each coordinate Zn(2+).

This sequence belongs to the universal ribosomal protein uS14 family. Zinc-binding uS14 subfamily. In terms of assembly, part of the 30S ribosomal subunit. Contacts proteins S3 and S10. It depends on Zn(2+) as a cofactor.

Functionally, binds 16S rRNA, required for the assembly of 30S particles and may also be responsible for determining the conformation of the 16S rRNA at the A site. The protein is Small ribosomal subunit protein uS14 of Mycoplasma genitalium (strain ATCC 33530 / DSM 19775 / NCTC 10195 / G37) (Mycoplasmoides genitalium).